We begin with the raw amino-acid sequence, 599 residues long: Aspartate--tRNA(Asp/Asn) ligase (599 aa).

E173 is an L-aspartate binding site. The interval 197–200 is aspartate; the sequence is QLYK. R219 provides a ligand contact to L-aspartate. Residues 219–221 and Q228 contribute to the ATP site; that span reads RDE. H451 is an L-aspartate binding site. ATP is bound at residue E484. R491 serves as a coordination point for L-aspartate. Residue 536-539 coordinates ATP; the sequence is GLDR.

The protein belongs to the class-II aminoacyl-tRNA synthetase family. Type 1 subfamily. Homodimer.

The protein localises to the cytoplasm. The catalysed reaction is tRNA(Asx) + L-aspartate + ATP = L-aspartyl-tRNA(Asx) + AMP + diphosphate. Aspartyl-tRNA synthetase with relaxed tRNA specificity since it is able to aspartylate not only its cognate tRNA(Asp) but also tRNA(Asn). Reaction proceeds in two steps: L-aspartate is first activated by ATP to form Asp-AMP and then transferred to the acceptor end of tRNA(Asp/Asn). The protein is Aspartate--tRNA(Asp/Asn) ligase of Methylococcus capsulatus (strain ATCC 33009 / NCIMB 11132 / Bath).